A 436-amino-acid chain; its full sequence is Magnesium transporter MRS2-B (436 aa).

Low complexity-rich tracts occupy residues 1–14 and 29–54; these read MSAA…GDSA and VASV…FPGG. The disordered stretch occupies residues 1-60; that stretch reads MSAAAASSAAGDSAKQPLLHHQRGNPPHVASVSSPSLPSAPPGALAGGRRFPGGLDVPNL. A coiled-coil region spans residues 176–242; the sequence is LALEAACSFL…RDEIEQLMDD (67 aa). Transmembrane regions (helical) follow at residues 372–392 and 408–428; these read LLLT…GIFG and WVLI…LWFF. Positions 392–394 match the Required for magnesium transport activity motif; sequence GMN.

It belongs to the CorA metal ion transporter (MIT) (TC 1.A.35.5) family.

It localises to the membrane. Magnesium transporter that may mediate the influx of magnesium. This chain is Magnesium transporter MRS2-B (MRS2-B), found in Oryza sativa subsp. indica (Rice).